Reading from the N-terminus, the 548-residue chain is MAAKEIIFHDGARAKLVEGVNLLANAVKVTLGPKGRNVVLERSFGSPVVTKDGVSVAKEIELADKVQNIGAQLVKEVASKTSDAAGDGTTTATVLAQAIVREGQKYVAAGLNPLDLKRGIDKAVAAAVDELKKISKPTTTSKEIAQVATISANGEESIGQRIAEAIDRVGKEGVITVEDGKSLADELDVVEGLQFDRGYLSPYFINHPERQLAVLDEPFILLHDKKISNIRDLLPVLEQVAKAGRPLLIVAEDVEGEALATLVVNNIRGILKTVAVKAPGFGDRRKALLEDIAILTGGQVITEETGLTLEKATLQELGRAKRIEVGKENTTLIDGAGDKPNIDARVKQIRAQIAEATSDYDREKLQERVAKLAGGVAVIKVGGATEVEVKEKKDRVDDALHATRAAVEEGIVPGGGVALIRVKQAIAALAGANADQKAGISIVLRALEEPLRQIVANAGEEASVVVATVAAGQGNYGYNAATGEYGDLVESGVLDPTKVTRTALQNAASIAGLLLTTDATVHEAPKDAPPTAPAGVPGAGAGGPGFDF.

ATP-binding positions include 30–33, Lys-51, 87–91, Gly-415, 479–481, and Asp-495; these read TLGP, DGTTT, and NAA. The tract at residues 524–548 is disordered; the sequence is APKDAPPTAPAGVPGAGAGGPGFDF. Positions 537-548 are enriched in gly residues; sequence PGAGAGGPGFDF.

This sequence belongs to the chaperonin (HSP60) family. As to quaternary structure, forms a cylinder of 14 subunits composed of two heptameric rings stacked back-to-back. Interacts with the co-chaperonin GroES.

The protein resides in the cytoplasm. The enzyme catalyses ATP + H2O + a folded polypeptide = ADP + phosphate + an unfolded polypeptide.. In terms of biological role, together with its co-chaperonin GroES, plays an essential role in assisting protein folding. The GroEL-GroES system forms a nano-cage that allows encapsulation of the non-native substrate proteins and provides a physical environment optimized to promote and accelerate protein folding. This is Chaperonin GroEL 2 from Burkholderia pseudomallei (strain 668).